A 216-amino-acid chain; its full sequence is Peptide methionine sulfoxide reductase MsrA (216 aa).

Residue C58 is part of the active site.

This sequence belongs to the MsrA Met sulfoxide reductase family.

The catalysed reaction is L-methionyl-[protein] + [thioredoxin]-disulfide + H2O = L-methionyl-(S)-S-oxide-[protein] + [thioredoxin]-dithiol. It carries out the reaction [thioredoxin]-disulfide + L-methionine + H2O = L-methionine (S)-S-oxide + [thioredoxin]-dithiol. Functionally, has an important function as a repair enzyme for proteins that have been inactivated by oxidation. Catalyzes the reversible oxidation-reduction of methionine sulfoxide in proteins to methionine. The polypeptide is Peptide methionine sulfoxide reductase MsrA (Azotobacter vinelandii (strain DJ / ATCC BAA-1303)).